A 115-amino-acid chain; its full sequence is UPF0102 protein NMB2089 (115 aa).

It belongs to the UPF0102 family.

The chain is UPF0102 protein NMB2089 from Neisseria meningitidis serogroup B (strain ATCC BAA-335 / MC58).